The primary structure comprises 181 residues: uncharacterized protein (181 aa).

Positions 1–19 (MRRLLACSAGVLCFSQLGA) are cleaved as a signal peptide.

This is an uncharacterized protein from Treponema pallidum (strain Nichols).